An 875-amino-acid chain; its full sequence is Alanine--tRNA ligase (875 aa).

Residues His-564, His-568, Cys-666, and His-670 each contribute to the Zn(2+) site.

Belongs to the class-II aminoacyl-tRNA synthetase family. Homotetramer. Requires Zn(2+) as cofactor.

It is found in the cytoplasm. The enzyme catalyses tRNA(Ala) + L-alanine + ATP = L-alanyl-tRNA(Ala) + AMP + diphosphate. Its function is as follows. Catalyzes the attachment of alanine to tRNA(Ala) in a two-step reaction: alanine is first activated by ATP to form Ala-AMP and then transferred to the acceptor end of tRNA(Ala). Also edits incorrectly charged Ser-tRNA(Ala) and Gly-tRNA(Ala) via its editing domain. This chain is Alanine--tRNA ligase, found in Klebsiella pneumoniae subsp. pneumoniae (strain ATCC 700721 / MGH 78578).